A 520-amino-acid chain; its full sequence is Glucose starvation modulator protein 1 (520 aa).

The zn(2)-C6 fungal-type DNA-binding region spans 20–48; sequence CSFCHSKHLQCSNNRPCKNCVKRNIADQC. Disordered stretches follow at residues 63–104 and 194–213; these read AKNK…SSGR and PASP…PNEM. Residues 74-85 are compositionally biased toward low complexity; that stretch reads SLESSSSPFSPL. Residues 90–104 are compositionally biased toward polar residues; it reads INSQSSQPLDPSSGR. In terms of domain architecture, PAS spans 376–445; that stretch reads DYEKLSHLNS…FKLFKSVAVG (70 aa).

The protein belongs to the ERT1/acuK family.

The protein localises to the nucleus. Its function is as follows. Transcription factor which regulates nonfermentable carbon utilization. This chain is Glucose starvation modulator protein 1 (GSM1), found in Meyerozyma guilliermondii (strain ATCC 6260 / CBS 566 / DSM 6381 / JCM 1539 / NBRC 10279 / NRRL Y-324) (Yeast).